Reading from the N-terminus, the 486-residue chain is Glucose-6-phosphate 1-dehydrogenase (486 aa).

NADP(+) is bound by residues G13 to K20, R47, D86 to V87, and K149. Positions 179, 183, 217, and 236 each coordinate substrate. H241 serves as the catalytic Proton acceptor. Residues K339 and K344 each coordinate substrate.

The protein belongs to the glucose-6-phosphate dehydrogenase family. In terms of assembly, homodimer.

The enzyme catalyses D-glucose 6-phosphate + NAD(+) = 6-phospho-D-glucono-1,5-lactone + NADH + H(+). It catalyses the reaction D-glucose 6-phosphate + NADP(+) = 6-phospho-D-glucono-1,5-lactone + NADPH + H(+). It participates in carbohydrate degradation; pentose phosphate pathway; D-ribulose 5-phosphate from D-glucose 6-phosphate (oxidative stage): step 1/3. Its function is as follows. Catalyzes the oxidation of glucose 6-phosphate to 6-phosphogluconolactone. Can utilize either NADP(+) or NAD(+). This Leuconostoc mesenteroides protein is Glucose-6-phosphate 1-dehydrogenase.